The sequence spans 267 residues: uncharacterized protein (267 aa).

The interval 58-90 (RHTDDKQEKNQNEGEDNQKGENKTTDQQDGPKK) is disordered. 2 consecutive transmembrane segments (helical) span residues 101–121 (IYVLAVAGLSFVTSFIMLSQM) and 226–246 (GMTTVKMIQLIIGVVILAWLG).

Its subcellular location is the membrane. This is an uncharacterized protein from Caenorhabditis elegans.